Reading from the N-terminus, the 317-residue chain is Melanocyte-stimulating hormone receptor (317 aa).

Residues 1-37 lie on the Extracellular side of the membrane; that stretch reads MPVLGSQRRLLGSLNCTPPATLPLTLAPNRTGPQCLE. N29 carries N-linked (GlcNAc...) asparagine glycosylation. Residues 38 to 63 traverse the membrane as a helical segment; sequence VSIPDGLFLSLGLVSLVENVLVVAAI. The Cytoplasmic portion of the chain corresponds to 64–72; the sequence is AKNRNLHSP. Residues 73-93 form a helical membrane-spanning segment; that stretch reads MYYFICCLAMSDLLVSVSNVL. Residues 94–118 lie on the Extracellular side of the membrane; it reads ETAVMLLLEAGVLATRAAVVQQLDN. Residues 119-140 form a helical membrane-spanning segment; it reads VIDVLICSSMVSSLCFLGAIAV. At 141–163 the chain is on the cytoplasmic side; it reads DRYISIFYALRYHSVVTLPRAWR. The chain crosses the membrane as a helical span at residues 164 to 183; sequence IIAAIWVASILTSVLSITYY. The Extracellular portion of the chain corresponds to 184–191; that stretch reads NHTVVLLC. The helical transmembrane segment at 192–211 threads the bilayer; the sequence is LVGFFIAMLALMAVLYVHML. Topologically, residues 212–240 are cytoplasmic; the sequence is ARACQHARGIARLQKRQRPIHQGFGLKGA. Residues 241 to 266 form a helical membrane-spanning segment; the sequence is ATLTILLGVFFLCWGPFFLHLSLIVL. At 267–279 the chain is on the extracellular side; the sequence is CPQHPTCGCIFKN. Residues 280–300 traverse the membrane as a helical segment; the sequence is FNLFLALIICNAIVDPLIYAF. At 301–317 the chain is on the cytoplasmic side; that stretch reads RSQELRKTLQEVLQCSW. A lipid anchor (S-palmitoyl cysteine) is attached at C315.

This sequence belongs to the G-protein coupled receptor 1 family. As to quaternary structure, interacts with MGRN1, but does not undergo MGRN1-mediated ubiquitination; this interaction competes with GNAS-binding and thus inhibits agonist-induced cAMP production. Interacts with OPN3; the interaction results in a decrease in MC1R-mediated cAMP signaling and ultimately a decrease in melanin production in melanocytes.

Its subcellular location is the cell membrane. Its function is as follows. Receptor for MSH (alpha, beta and gamma) and ACTH. The activity of this receptor is mediated by G proteins which activate adenylate cyclase. Mediates melanogenesis, the production of eumelanin (black/brown) and phaeomelanin (red/yellow), via regulation of cAMP signaling in melanocytes. The protein is Melanocyte-stimulating hormone receptor (MC1R) of Ovis aries (Sheep).